Here is a 301-residue protein sequence, read N- to C-terminus: Uricase (301 aa).

Catalysis depends on charge relay system residues K11 and T58. Urate-binding residues include T58, D59, F160, R177, V228, Q229, and N255. Residue H257 is the Charge relay system of the active site. Residues 299–301 carry the Microbody targeting signal motif; the sequence is AKL.

It belongs to the uricase family.

The protein localises to the peroxisome. The enzyme catalyses urate + O2 + H2O = 5-hydroxyisourate + H2O2. It functions in the pathway purine metabolism; urate degradation; (S)-allantoin from urate: step 1/3. Its function is as follows. Catalyzes the oxidation of uric acid to 5-hydroxyisourate, which is further processed to form (S)-allantoin. In Emericella nidulans (strain FGSC A4 / ATCC 38163 / CBS 112.46 / NRRL 194 / M139) (Aspergillus nidulans), this protein is Uricase (uaZ).